A 262-amino-acid polypeptide reads, in one-letter code: F-actin-capping protein subunit alpha (262 aa).

The protein belongs to the F-actin-capping protein alpha subunit family. Heterodimer of an alpha and a beta subunit.

F-actin-capping proteins bind in a Ca(2+)-independent manner to the fast growing ends of actin filaments (barbed end) thereby blocking the exchange of subunits at these ends. Unlike other capping proteins (such as gelsolin and severin), these proteins do not sever actin filaments. The chain is F-actin-capping protein subunit alpha (CAP1) from Kluyveromyces lactis (strain ATCC 8585 / CBS 2359 / DSM 70799 / NBRC 1267 / NRRL Y-1140 / WM37) (Yeast).